Consider the following 361-residue polypeptide: Phospho-N-acetylmuramoyl-pentapeptide-transferase (361 aa).

10 consecutive transmembrane segments (helical) span residues 25–45, 73–93, 98–118, 139–159, 168–188, 200–220, 237–257, 264–284, 289–309, and 339–359; these read RGIL…PAVI, TMGG…WGDL, VWLV…DDWI, IFGL…AAIT, IALP…IVGF, GLAI…AYAS, AGEL…FLWF, VFMG…VAVI, LVLV…MIQV, and VIVR…ATLK.

Belongs to the glycosyltransferase 4 family. MraY subfamily. The cofactor is Mg(2+).

It is found in the cell inner membrane. The enzyme catalyses UDP-N-acetyl-alpha-D-muramoyl-L-alanyl-gamma-D-glutamyl-meso-2,6-diaminopimeloyl-D-alanyl-D-alanine + di-trans,octa-cis-undecaprenyl phosphate = di-trans,octa-cis-undecaprenyl diphospho-N-acetyl-alpha-D-muramoyl-L-alanyl-D-glutamyl-meso-2,6-diaminopimeloyl-D-alanyl-D-alanine + UMP. It participates in cell wall biogenesis; peptidoglycan biosynthesis. Its function is as follows. Catalyzes the initial step of the lipid cycle reactions in the biosynthesis of the cell wall peptidoglycan: transfers peptidoglycan precursor phospho-MurNAc-pentapeptide from UDP-MurNAc-pentapeptide onto the lipid carrier undecaprenyl phosphate, yielding undecaprenyl-pyrophosphoryl-MurNAc-pentapeptide, known as lipid I. The chain is Phospho-N-acetylmuramoyl-pentapeptide-transferase from Xanthomonas campestris pv. campestris (strain 8004).